Reading from the N-terminus, the 340-residue chain is Branched-chain-amino-acid aminotransferase (340 aa).

Position 187 is an N6-(pyridoxal phosphate)lysine (K187).

The protein belongs to the class-IV pyridoxal-phosphate-dependent aminotransferase family. Requires pyridoxal 5'-phosphate as cofactor.

It carries out the reaction L-leucine + 2-oxoglutarate = 4-methyl-2-oxopentanoate + L-glutamate. It catalyses the reaction L-isoleucine + 2-oxoglutarate = (S)-3-methyl-2-oxopentanoate + L-glutamate. The enzyme catalyses L-valine + 2-oxoglutarate = 3-methyl-2-oxobutanoate + L-glutamate. Its pathway is amino-acid biosynthesis; L-isoleucine biosynthesis; L-isoleucine from 2-oxobutanoate: step 4/4. It participates in amino-acid biosynthesis; L-leucine biosynthesis; L-leucine from 3-methyl-2-oxobutanoate: step 4/4. The protein operates within amino-acid biosynthesis; L-valine biosynthesis; L-valine from pyruvate: step 4/4. Its function is as follows. Acts on leucine, isoleucine and valine. The chain is Branched-chain-amino-acid aminotransferase (ilvE) from Helicobacter pylori (strain J99 / ATCC 700824) (Campylobacter pylori J99).